A 376-amino-acid chain; its full sequence is Adipocyte plasma membrane-associated protein (376 aa).

The chain crosses the membrane as a helical span at residues 1-17; it reads MTFLMLAVSLAIPLLGA. Residue asparagine 120 is glycosylated (N-linked (GlcNAc...) asparagine).

Belongs to the strictosidine synthase family.

It localises to the membrane. In terms of biological role, exhibits strong arylesterase activity with beta-naphthyl acetate and phenyl acetate. May play a role in adipocyte differentiation. The sequence is that of Adipocyte plasma membrane-associated protein (Apmap) from Rattus norvegicus (Rat).